Consider the following 504-residue polypeptide: Maturase K (504 aa).

It belongs to the intron maturase 2 family. MatK subfamily.

Its subcellular location is the plastid. The protein localises to the chloroplast. Usually encoded in the trnK tRNA gene intron. Probably assists in splicing its own and other chloroplast group II introns. The sequence is that of Maturase K from Capsella bursa-pastoris (Shepherd's purse).